The primary structure comprises 403 residues: MDRLTVRELSPEEKKVLVRVDFNVPIKDGKILDDIRIRSAMPTIHYLLQKRAAVILMSHLGRPQGKGFEEKYSLQPVVEVLEGYLGHHVPLAPDCVGEVARQAVAQISPGRVLLLENLRFHPGEEHPEEHPAFAAELSSYGDFYVNDAFGTSHRKHASVYTVPQAFPGRSAAGLLMEKELEFLGQHLLISPKRPFTAILGGSKVSSKIGVIEALLSQVDNLLLAGGMGFTFLKALGKSVGNSLVEESGIELARRVLHIAQQRNVRIVLPIDVKVAKACTPAVSWTEVSIDQGIPQDLEGLDIGTKTVQEFCKIIDASSTIFWNGPVGVYEVPPFDQGSMAIANCLARHPSAITVVGGGDAAAVVALAGCTAQVSHVSTGGGASLEFLEKGFLPGTEVLSPSQE.

Residues 21–23 (DFN), Arg-36, 59–62 (HLGR), Arg-119, and Arg-154 contribute to the substrate site. ATP is bound by residues Lys-207, Gly-299, Glu-330, and 357 to 360 (GGDA).

The protein belongs to the phosphoglycerate kinase family. In terms of assembly, monomer.

It localises to the cytoplasm. It catalyses the reaction (2R)-3-phosphoglycerate + ATP = (2R)-3-phospho-glyceroyl phosphate + ADP. The protein operates within carbohydrate degradation; glycolysis; pyruvate from D-glyceraldehyde 3-phosphate: step 2/5. The chain is Phosphoglycerate kinase from Chlamydia abortus (strain DSM 27085 / S26/3) (Chlamydophila abortus).